A 479-amino-acid polypeptide reads, in one-letter code: Zinc metalloproteinase/disintegrin (479 aa).

The first 20 residues, 1 to 20 (MIQVLLVTICLAAFPYQGSS), serve as a signal peptide directing secretion. A propeptide spanning residues 21–187 (IILESGKVND…PIKKASQLIV (167 aa)) is cleaved from the precursor. Residues 193-390 (RYMEIVIVVD…ENPPCILNKP (198 aa)) enclose the Peptidase M12B domain. Positions 196 and 280 each coordinate Ca(2+). Intrachain disulfides connect cysteine 304-cysteine 385, cysteine 344-cysteine 369, and cysteine 346-cysteine 352. Histidine 329 contacts Zn(2+). The active site involves glutamate 330. Residues histidine 333 and histidine 339 each contribute to the Zn(2+) site. 2 residues coordinate Ca(2+): cysteine 385 and asparagine 388. A propeptide spanning residues 390-414 (PLRTDTVSTPVSGNELLEAGKDYDR) is cleaved from the precursor. The Disintegrin domain maps to 398–479 (TPVSGNELLE…ADCPRNPYHA (82 aa)). Disulfide bonds link cysteine 435/cysteine 441, cysteine 440/cysteine 465, and cysteine 453/cysteine 472. The Cell attachment site motif lies at 457-459 (RGD).

This sequence belongs to the venom metalloproteinase (M12B) family. P-II subfamily. P-IIa sub-subfamily. In terms of assembly, monomer. Zn(2+) serves as cofactor. Expressed by the venom gland.

The protein resides in the secreted. In terms of biological role, snake venom metalloproteinase that impairs hemostasis in the envenomed animal. Its function is as follows. Inhibits platelet aggregation induced by ADP, thrombin, platelet-activating factor and collagen. Acts by inhibiting fibrinogen interaction with platelet receptors GPIIb/GPIIIa (ITGA2B/ITGB3). The sequence is that of Zinc metalloproteinase/disintegrin from Deinagkistrodon acutus (Hundred-pace snake).